Reading from the N-terminus, the 436-residue chain is UDP-glucuronate 4-epimerase 5 (436 aa).

The next 2 helical transmembrane spans lie at 36–56 (LTLW…LSPP) and 95–115 (GLTV…SIAL). 97-128 (TVLVTGASGFVGTHVSIALRRRGDGVLGLDNF) contributes to the NAD(+) binding site. Tyr247 acts as the Proton acceptor in catalysis.

The protein belongs to the NAD(P)-dependent epimerase/dehydratase family. In terms of assembly, homodimer. In leaves, pollen and siliques, but not in roots or flowers.

It is found in the golgi apparatus. It localises to the golgi stack membrane. The enzyme catalyses UDP-alpha-D-glucuronate = UDP-alpha-D-galacturonate. Its function is as follows. Involved in the synthesis of the negatively charged monosaccharide that forms the backbone of pectic cell wall components. This is UDP-glucuronate 4-epimerase 5 (GAE5) from Arabidopsis thaliana (Mouse-ear cress).